A 118-amino-acid chain; its full sequence is Na(+)/H(+) antiporter subunit G1 (118 aa).

3 helical membrane-spanning segments follow: residues 4–24, 38–58, and 60–80; these read IILI…SALA, AHAA…GTFL, and FIAT…FVLI.

The protein belongs to the CPA3 antiporters (TC 2.A.63) subunit G family. As to quaternary structure, may form a heterooligomeric complex that consists of seven subunits: mnhA1, mnhB1, mnhC1, mnhD1, mnhE1, mnhF1 and mnhG1.

It is found in the cell membrane. In terms of biological role, mnh complex is a Na(+)/H(+) antiporter involved in Na(+) excretion. The sequence is that of Na(+)/H(+) antiporter subunit G1 (mnhG1) from Staphylococcus aureus (strain Mu3 / ATCC 700698).